The sequence spans 548 residues: Myrosinase (548 aa).

The signal sequence occupies residues 1 to 20; sequence MKLLHGLALVFLLAAASCKA. Cystine bridges form between Cys26-Cys458, Cys34-Cys454, and Cys226-Cys236. Gln59 contributes to the substrate binding site. 2 residues coordinate Zn(2+): His76 and Asp90. Residue Asn110 is glycosylated (N-linked (GlcNAc...) asparagine). Substrate-binding residues include His161 and Asn206. Gln207 lines the L-ascorbate pocket. Asn240 carries N-linked (GlcNAc...) asparagine glycosylation. Arg281 provides a ligand contact to L-ascorbate. N-linked (GlcNAc...) asparagine glycosylation occurs at Asn331. Tyr352 serves as a coordination point for substrate. Catalysis depends on Glu429, which acts as the Nucleophile. Residues Trp477 and 484-485 contribute to the substrate site; that span reads EF. N-linked (GlcNAc...) asparagine glycosylation occurs at Asn520.

This sequence belongs to the glycosyl hydrolase 1 family. Homodimer. In vacuoles called myrosin grains of a certain class of cells, myrosin cells, distributed in the cotyledons and the axis of the embryo as well as in different organs of the growing plant.

Its subcellular location is the vacuole. It catalyses the reaction a thioglucoside + H2O = a sugar + a thiol.. In terms of biological role, degradation of glucosinolates (glucose residue linked by a thioglucoside bound to an amino acid derivative) to glucose, sulfate and any of the products: thiocyanates, isothiocyanates, nitriles, epithionitriles or oxazolidine-2-thiones. The sequence is that of Myrosinase from Brassica napus (Rape).